Consider the following 331-residue polypeptide: Serine racemase (331 aa).

Residues Ser-34 and Lys-54 each contribute to the ATP site. Lys-59 serves as the catalytic Proton acceptor. An N6-(pyridoxal phosphate)lysine modification is found at Lys-59. Thr-81 is a Ca(2+) binding site. Residue Ser-84 is the Proton acceptor of the active site. Asn-86 provides a ligand contact to pyridoxal 5'-phosphate. Tyr-121 contributes to the ATP binding site. Asp-178 provides a ligand contact to Mg(2+). Pyridoxal 5'-phosphate is bound by residues Gly-186, Gly-187, and Gly-188. 3 residues coordinate Ca(2+): Glu-210, Ala-214, and Asp-216. The Mg(2+) site is built by Glu-210, Ala-214, and Asp-216. Mn(2+)-binding residues include Glu-210, Ala-214, and Asp-216. Lys-278 serves as a coordination point for ATP. Ser-314 contributes to the pyridoxal 5'-phosphate binding site. Asn-317 is an ATP binding site.

This sequence belongs to the serine/threonine dehydratase family. In terms of assembly, homodimer. It depends on Mg(2+) as a cofactor. The cofactor is Mn(2+). Requires Ca(2+) as cofactor. Pyridoxal 5'-phosphate serves as cofactor. As to expression, expressed in the whole plant.

The enzyme catalyses L-serine = D-serine. It carries out the reaction L-serine = pyruvate + NH4(+). The catalysed reaction is D-serine = pyruvate + NH4(+). Its activity is regulated as follows. Inhibited by hydroxylamine. Racemase activity is enhanced by Ca(2+), Mg(2+), Mn(2+), and is decreased by Ni(2+), Zn(2+). Hydratase activity is enhanced by Ca(2+), Mg(2+), Mn(2+), Cu(2+), Fe(2+), Ni(2+). In terms of biological role, catalyzes the synthesis of D-serine from L-serine. Has dehydratase activity towards both L-serine and D-serine. Displays high substrate specificity for L-serine, whereas L-alanine, L-arginine, and L-glutamine were poor substrates. The polypeptide is Serine racemase (SR) (Arabidopsis thaliana (Mouse-ear cress)).